We begin with the raw amino-acid sequence, 440 residues long: C4-dicarboxylate transport protein (440 aa).

The next 9 membrane-spanning stretches (helical) occupy residues 15-35 (VLVA…TGVA), 46-66 (LIKM…IAGM), 78-98 (YALL…LVVV), 146-166 (AFAN…GFAL), 190-210 (IINM…AFTI), 224-244 (LMAC…GGIC), 291-311 (VVGL…SIYL), 332-352 (ITLL…TGSG), and 354-374 (IVLA…LALI). The segment at 420-440 (GAPLVDTRPTDDLGVAEGPAR) is disordered.

This sequence belongs to the dicarboxylate/amino acid:cation symporter (DAACS) (TC 2.A.23) family.

Its subcellular location is the cell inner membrane. Its function is as follows. Responsible for the transport of dicarboxylates such as succinate, fumarate, and malate from the periplasm across the membrane. The polypeptide is C4-dicarboxylate transport protein (Pseudomonas putida (strain ATCC 700007 / DSM 6899 / JCM 31910 / BCRC 17059 / LMG 24140 / F1)).